Here is a 398-residue protein sequence, read N- to C-terminus: Formate-dependent phosphoribosylglycinamide formyltransferase (398 aa).

Residues 21–22 (EL) and Glu-81 each bind N(1)-(5-phospho-beta-D-ribosyl)glycinamide. Residues Arg-113, Lys-154, 194–197 (EEYV), and Glu-202 each bind ATP. The region spanning 118-314 (RFAAEKVKVP…EFQVHVRSAL (197 aa)) is the ATP-grasp domain. Glu-273 and Glu-285 together coordinate Mg(2+). N(1)-(5-phospho-beta-D-ribosyl)glycinamide-binding positions include Asp-292, Lys-362, and 369–370 (RR).

This sequence belongs to the PurK/PurT family. Homodimer.

It carries out the reaction N(1)-(5-phospho-beta-D-ribosyl)glycinamide + formate + ATP = N(2)-formyl-N(1)-(5-phospho-beta-D-ribosyl)glycinamide + ADP + phosphate + H(+). It participates in purine metabolism; IMP biosynthesis via de novo pathway; N(2)-formyl-N(1)-(5-phospho-D-ribosyl)glycinamide from N(1)-(5-phospho-D-ribosyl)glycinamide (formate route): step 1/1. Functionally, involved in the de novo purine biosynthesis. Catalyzes the transfer of formate to 5-phospho-ribosyl-glycinamide (GAR), producing 5-phospho-ribosyl-N-formylglycinamide (FGAR). Formate is provided by PurU via hydrolysis of 10-formyl-tetrahydrofolate. This Sulfolobus acidocaldarius (strain ATCC 33909 / DSM 639 / JCM 8929 / NBRC 15157 / NCIMB 11770) protein is Formate-dependent phosphoribosylglycinamide formyltransferase.